A 393-amino-acid polypeptide reads, in one-letter code: Dual specificity mitogen-activated protein kinase kinase 1 (393 aa).

A disordered region spans residues 1–27; it reads MPKKKPTPIQLNPAPDGSAVNGTSSAE. Residues 68 to 361 form the Protein kinase domain; that stretch reads FEKISELGAG…LKQLMVHAFI (294 aa). ATP-binding positions include 74–82 and Lys97; that span reads LGAGNGGVV. Asp190 acts as the Proton acceptor in catalysis. A phosphoserine; by RAF mark is found at Ser218 and Ser222. An RAF1-binding region spans residues 270–307; that stretch reads ELELLFGCHVEGDAAETPPRPRTPGRPLSSYGMDSRPP. Thr286 carries the phosphothreonine modification. Thr292 is subject to Phosphothreonine; by MAPK1. A Phosphoserine; by PAK modification is found at Ser298.

This sequence belongs to the protein kinase superfamily. STE Ser/Thr protein kinase family. MAP kinase kinase subfamily. As to quaternary structure, found in a complex with at least BRAF, HRAS, MAP2K1, MAPK3/ERK1 and RGS14. Forms a heterodimer with MAP2K2/MEK2. Forms heterodimers with KSR2 which further dimerize to form tetramers. Interacts with KSR1 or KSR2 and BRAF; the interaction with KSR1 or KSR2 mediates KSR1-BRAF or KSR2-BRAF dimerization. Interacts with ARBB2, LAMTOR3, MAPK1/ERK2 and RAF1. Interacts with MAPK1/ERK2. Interacts with MORG1. Interacts with PPARG. Interacts with SGK1. Interacts with BIRC6/bruce. Interacts with KAT7; the interaction promotes KAT7 phosphorylation. Interacts with RAF1 and NEK10; the interaction is required for ERK1/2-signaling pathway activation in response to UV irradiation. Interacts with TRAF3IP3. Interacts with MOS. In terms of processing, phosphorylation at Ser-218 and Ser-222 by MAP kinase kinase kinases (BRAF or MEKK1) positively regulates kinase activity. Also phosphorylated at Thr-292 by MAPK1/ERK2 and at Ser-298 by PAK. MAPK1/ERK2 phosphorylation of Thr-292 occurs in response to cellular adhesion and leads to inhibition of Ser-298 phosphorylation by PAK. Autophosphorylated at Ser-218 and Ser-222, autophosphosphorylation is promoted by NEK10 following UV irradiation.

It is found in the cytoplasm. It localises to the cytoskeleton. The protein localises to the microtubule organizing center. Its subcellular location is the centrosome. The protein resides in the spindle pole body. It is found in the nucleus. It localises to the membrane. The enzyme catalyses L-seryl-[protein] + ATP = O-phospho-L-seryl-[protein] + ADP + H(+). The catalysed reaction is L-threonyl-[protein] + ATP = O-phospho-L-threonyl-[protein] + ADP + H(+). It carries out the reaction L-tyrosyl-[protein] + ATP = O-phospho-L-tyrosyl-[protein] + ADP + H(+). Its activity is regulated as follows. Ras proteins such as HRAS mediate the activation of RAF proteins such as RAF1 or BRAF which in turn activate extracellular signal-regulated kinases (ERK) through MAPK (mitogen-activated protein kinases) and ERK kinases MAP2K1/MEK1 and MAP2K2/MEK2. Activation occurs through phosphorylation of Ser-218 and Ser-222. MAP2K1/MEK1 binds KSR1 or KSR2 releasing the inhibitory intramolecular interaction between KSR1 or KSR2 protein kinase and N-terminal domains. This allows KSR1 or KSR2 dimerization with BRAF leading to BRAF activation and phosphorylation of MAP2K1. MAP2K1/MEK1 is also the target of negative feed-back regulation by its substrate kinases, such as MAPK1/ERK2. These phosphorylate MAP2K1/MEK1 on Thr-292, thereby facilitating dephosphorylation of the activating residues Ser-218 and Ser-222. Inhibited by serine/threonine phosphatase 2A. Dual specificity protein kinase which acts as an essential component of the MAP kinase signal transduction pathway. Binding of extracellular ligands such as growth factors, cytokines and hormones to their cell-surface receptors activates RAS and this initiates RAF1 activation. RAF1 then further activates the dual-specificity protein kinases MAP2K1/MEK1 and MAP2K2/MEK2. Both MAP2K1/MEK1 and MAP2K2/MEK2 function specifically in the MAPK/ERK cascade, and catalyze the concomitant phosphorylation of a threonine and a tyrosine residue in a Thr-Glu-Tyr sequence located in the extracellular signal-regulated kinases MAPK3/ERK1 and MAPK1/ERK2, leading to their activation and further transduction of the signal within the MAPK/ERK cascade. Activates BRAF in a KSR1 or KSR2-dependent manner; by binding to KSR1 or KSR2 releases the inhibitory intramolecular interaction between KSR1 or KSR2 protein kinase and N-terminal domains which promotes KSR1 or KSR2-BRAF dimerization and BRAF activation. Depending on the cellular context, this pathway mediates diverse biological functions such as cell growth, adhesion, survival and differentiation, predominantly through the regulation of transcription, metabolism and cytoskeletal rearrangements. One target of the MAPK/ERK cascade is peroxisome proliferator-activated receptor gamma (PPARG), a nuclear receptor that promotes differentiation and apoptosis. MAP2K1/MEK1 has been shown to export PPARG from the nucleus. The MAPK/ERK cascade is also involved in the regulation of endosomal dynamics, including lysosome processing and endosome cycling through the perinuclear recycling compartment (PNRC), as well as in the fragmentation of the Golgi apparatus during mitosis. This is Dual specificity mitogen-activated protein kinase kinase 1 (Map2k1) from Mus musculus (Mouse).